The sequence spans 956 residues: MDDIDSSDGAAAARAGEIGSIGVSTPWKPIQLVFKRYLPQNGSASKVHVAVKKPVVVRLTRDLVETYKICDPQFKYRGELNPKRYLTTPSVGVNNDGFDNVNYDLILAVNDDFCSSDSRQRYIVKDLLGHGTFGQVAKCWVPETNSFVAVKVIKNQLAYYQQALVEVSILTTLNKKYDPEDKNHIVRIYDYFLHQSHLCICFELLDMNLYELIKINQFRGLSLSIVKLFSKQILLGLALLKDAGIIHCDLKPENILLCASVKPTEIKIIDFGSACMEDKTVYSYIQSRYYRSPEVLLGYQYTTAIDMWSFGCIVAELFLGLPLFPGGSEFDILRRMIEILGKQPPDYVLKEAKNTNKFFKCVGSVHNLGNGGTYGGLKSAYMALTGEEFEAREKKKPEIGKEYFNHKNLEEIVKSYPYKINLPEDDVVKETQIRLALIDFLKGLMEFDPAKRWSPFQAAKHPFITGEPFTCPYNPPPETPRVHVTQNIKVDHHPGEGHWFAAGLSPHVSGRTRIPMHNSPHFQMMPYSHANSYGSIGSYGSYNDGTIQDNSYGSYGGTGNMFAYYSPVNHPGLYMQNQGGVSMLGTSPDARRRVMQYPHGNGPNGLGTSPSAGNFAPLPLGTSPSQFTPNTNNQFLAGSPGHHGPTSPVRNSCHGSPLGKMAAFSQINRRMSAGYSGGSQSQDSSLSQAQGHGMDNFYQNEGYSGQFSGSPSRRQLDSGVKNRKQTQGGTTLSTGYSTHNNANSSLRSNMYNPSSTAHHLENPDTALSVPDPGDWDPNYSDDLLLEEDSADESSLANAFSRGMQLGSTDASSYSRRFNSNASTSSSNPTTQRRYAPNQAFSQVETGSPPSNDPHARFGQHIPGSQYIPHVSQNSPSRLGQQPPQRYNHGRPNAGRTMDRNHMNAQLPPSNTNSGGQQRSPRSSSYTNGVPWGRRTNNHVPNVPSTSHGRVDYGSIA.

The Protein kinase domain occupies 122 to 464 (YIVKDLLGHG…PFQAAKHPFI (343 aa)). Residues 128 to 136 (LGHGTFGQV) and Lys-151 each bind ATP. Ser-222 is subject to Phosphoserine. The active-site Proton acceptor is the Asp-249. Disordered regions lie at residues 620–657 (LGTSPSQFTPNTNNQFLAGSPGHHGPTSPVRNSCHGSP), 672–781 (SAGY…NYSD), and 806–956 (GSTD…GSIA). A compositionally biased stretch (polar residues) spans 622–636 (TSPSQFTPNTNNQFL). Residues 672–691 (SAGYSGGSQSQDSSLSQAQG) are compositionally biased toward low complexity. 3 stretches are compositionally biased toward polar residues: residues 697 to 713 (FYQNEGYSGQFSGSPSR), 725 to 757 (QTQGGTTLSTGYSTHNNANSSLRSNMYNPSSTA), and 806 to 817 (GSTDASSYSRRF). A compositionally biased stretch (low complexity) spans 818–830 (NSNASTSSSNPTT). Polar residues-rich tracts occupy residues 838–849 (QAFSQVETGSPP), 870–884 (VSQNSPSRLGQQPPQ), and 902–912 (MNAQLPPSNTN). Positions 913-924 (SGGQQRSPRSSS) are enriched in low complexity. Polar residues predominate over residues 937–947 (NHVPNVPSTSH).

Belongs to the protein kinase superfamily. Ser/Thr protein kinase family. Autophosphorylated at Ser-222.

The catalysed reaction is L-seryl-[protein] + ATP = O-phospho-L-seryl-[protein] + ADP + H(+). The enzyme catalyses L-threonyl-[protein] + ATP = O-phospho-L-threonyl-[protein] + ADP + H(+). It catalyses the reaction L-tyrosyl-[protein] + ATP = O-phospho-L-tyrosyl-[protein] + ADP + H(+). In terms of biological role, dual specificity protein kinase that phosphorylates ANN1, ANN2 and CP29B at serine and threonine residues, and ANN1, ANN2 and ANN4 at tyrosine residues. May regulate the phosphorylation status of annexin proteins. Acts as a positive regulator in abscisic acid (ABA)-mediated regulation of postgermination growth and drought response. May regulate the expression of ABA-responsive genes such as RD22, RD29A, LTI65/RD29B and RAB18. The polypeptide is Dual specificity protein kinase YAK1 homolog (Arabidopsis thaliana (Mouse-ear cress)).